The following is an 87-amino-acid chain: Small ribosomal subunit protein uS15 (87 aa).

The protein belongs to the universal ribosomal protein uS15 family. Part of the 30S ribosomal subunit. Forms a bridge to the 50S subunit in the 70S ribosome, contacting the 23S rRNA.

Its function is as follows. One of the primary rRNA binding proteins, it binds directly to 16S rRNA where it helps nucleate assembly of the platform of the 30S subunit by binding and bridging several RNA helices of the 16S rRNA. Functionally, forms an intersubunit bridge (bridge B4) with the 23S rRNA of the 50S subunit in the ribosome. The polypeptide is Small ribosomal subunit protein uS15 (Dehalococcoides mccartyi (strain ATCC BAA-2100 / JCM 16839 / KCTC 5957 / BAV1)).